A 258-amino-acid chain; its full sequence is Zinc import ATP-binding protein ZnuC (258 aa).

Positions 7–233 (ITAKNINHAY…PAFQELFGQG (227 aa)) constitute an ABC transporter domain. Residue 39–46 (GPNGAGKS) participates in ATP binding.

The protein belongs to the ABC transporter superfamily. Zinc importer (TC 3.A.1.15.5) family. In terms of assembly, the complex is composed of two ATP-binding proteins (ZnuC), two transmembrane proteins (ZnuB) and a solute-binding protein (ZnuA).

It localises to the cell inner membrane. The catalysed reaction is Zn(2+)(out) + ATP(in) + H2O(in) = Zn(2+)(in) + ADP(in) + phosphate(in) + H(+)(in). Functionally, part of the ABC transporter complex ZnuABC involved in zinc import. Responsible for energy coupling to the transport system. This Hydrogenovibrio crunogenus (strain DSM 25203 / XCL-2) (Thiomicrospira crunogena) protein is Zinc import ATP-binding protein ZnuC.